The chain runs to 748 residues: Semaphorin-3B (748 aa).

The first 25 residues, 1–25 (MGRAEAAAMIPGLALLWVAGLGDTA), serve as a signal peptide directing secretion. Residues 30–512 (RLRLSFQELQ…SRSAVAQIAL (483 aa)) form the Sema domain. N-linked (GlcNAc...) asparagine glycosylation is present at Asn82. Residues Cys102 and Cys113 are joined by a disulfide bond. Asn124 carries N-linked (GlcNAc...) asparagine glycosylation. 5 disulfides stabilise this stretch: Cys131–Cys140, Cys268–Cys379, Cys292–Cys339, Cys515–Cys533, and Cys643–Cys709. The 99-residue stretch at 561–659 (PSTLCSGDSS…FSQPLRRLVL (99 aa)) folds into the Ig-like C2-type domain. A disordered region spans residues 708–748 (MCRPQPGHHSVAADSRRKGRNRRMHVSELRAERGPRSAAHW). Residues 732 to 742 (HVSELRAERGP) are compositionally biased toward basic and acidic residues.

It belongs to the semaphorin family.

It localises to the secreted. Inhibits axonal extension by providing local signals to specify territories inaccessible for growing axons. In Mus musculus (Mouse), this protein is Semaphorin-3B (Sema3b).